Reading from the N-terminus, the 473-residue chain is H(+)/Cl(-) exchange transporter ClcA (473 aa).

The Cytoplasmic portion of the chain corresponds to Met1–Pro32. The helical transmembrane segment at Leu33–Val69 threads the bilayer. The Periplasmic segment spans residues Gln70 to Phe76. The helical transmembrane segment at Leu77–Phe100 threads the bilayer. The short motif at Gly106–Pro110 is the Selectivity filter part_1 element. Residue Ser107 coordinates chloride. Residues Ile109–Leu116 constitute an intramembrane region (helical). The Cytoplasmic segment spans residues Glu117 to Arg123. 2 helical membrane passes run Trp124–Ala141 and Glu148–Phe166. Positions Gly146–Pro150 match the Selectivity filter part_2 motif. Topologically, residues Arg167–Thr176 are cytoplasmic. Intramembrane regions (helical) lie at residues Leu177–Ala189 and Pro193–Ile201. Over Glu202 to Ser214 the chain is Cytoplasmic. The chain crosses the membrane as a helical span at residues Ile215–Phe232. Residues Asn233–Leu252 are Periplasmic-facing. Residues Trp253–Gln281 traverse the membrane as a helical segment. Over Arg282–Glu287 the chain is Cytoplasmic. The helical transmembrane segment at Ile288–Glu309 threads the bilayer. Residues Pro310 to Ser329 are Periplasmic-facing. Transmembrane regions (helical) follow at residues Val330 to Ser349 and Gly355 to Ala376. The Selectivity filter part_3 signature appears at Gly355–Pro359. The chloride site is built by Ile356 and Phe357. Residues Val377 to Ala386 are Periplasmic-facing. The segment at residues Gly387 to Ser401 is an intramembrane region (helical). Residues Val402–Ala404 constitute an intramembrane region (note=Loop between two helices). Positions Pro405–Thr416 form an intramembrane region, helical. Positions Asp417–Leu421 form an intramembrane region, note=Loop between two helices. Residues Ile422 to Phe438 traverse the membrane as a helical segment. The Cytoplasmic portion of the chain corresponds to Leu439–Thr473. Tyr445 is a chloride binding site.

Belongs to the chloride channel (TC 2.A.49) family. ClcA subfamily. As to quaternary structure, homodimer.

It localises to the cell inner membrane. The catalysed reaction is 2 chloride(in) + H(+)(out) = 2 chloride(out) + H(+)(in). Proton-coupled chloride transporter. Functions as antiport system and exchanges two chloride ions for 1 proton. Probably acts as an electrical shunt for an outwardly-directed proton pump that is linked to amino acid decarboxylation, as part of the extreme acid resistance (XAR) response. This chain is H(+)/Cl(-) exchange transporter ClcA, found in Salmonella typhi.